The sequence spans 436 residues: F-box/LRR-repeat protein At2g40920 (436 aa).

The 51-residue stretch at 48–98 (EYLLQNFDLDHVMEILMRFPLTSLTRFKCVSKQWSSLISSRYFCNLLYTTV) folds into the F-box domain. 2 LRR repeats span residues 276–301 (NCVVVSFDIRSEQLTIIPVPREIHLD) and 393–416 (YYNLQSNDLRKVEIKGVPDSWFDK).

The sequence is that of F-box/LRR-repeat protein At2g40920 from Arabidopsis thaliana (Mouse-ear cress).